Reading from the N-terminus, the 889-residue chain is Alanine--tRNA ligase (889 aa).

Residues H569, H573, C671, and H675 each contribute to the Zn(2+) site.

This sequence belongs to the class-II aminoacyl-tRNA synthetase family. Zn(2+) serves as cofactor.

Its subcellular location is the cytoplasm. It catalyses the reaction tRNA(Ala) + L-alanine + ATP = L-alanyl-tRNA(Ala) + AMP + diphosphate. Functionally, catalyzes the attachment of alanine to tRNA(Ala) in a two-step reaction: alanine is first activated by ATP to form Ala-AMP and then transferred to the acceptor end of tRNA(Ala). Also edits incorrectly charged Ser-tRNA(Ala) and Gly-tRNA(Ala) via its editing domain. The chain is Alanine--tRNA ligase from Parasynechococcus marenigrum (strain WH8102).